The following is a 425-amino-acid chain: NNHGLQIQQQQQRNLSLHEYMSMELLQEAGVSIPKGHVAKSPDEAYAIAKKLGSKDVVIKAQVLAGGRGKGTFESGLKGGVKIVFSPEEAKAVSSQMIGKKLFTKQTGEKGRICNQVLVCERRYPRREYYFAITMERSFQGPVLIGSSQGGVNIEDVAAETPEAIVKEPIDIVEGIKKEQAVRLAQKMGFPPSIVDSAAENMIKLYNLFLKYDATMVEINPMVEDSDGAVLCMDAKINFDSNSAYRQKKIFDLQDWTQEDERDKDAAKANLNYIGLDGNIGCLVNGAGLAMATMDIIKLHGGTPANFLDVGGGATVHQVTEAFKLITSDKKVLSILVNIFGGIMRCDVIAQGIVMAVKDLEIKIPVVVRLQGTRVDDAKALIADSGLKILACDDLDEAAKMVVKLSEIVTLTKQAQVDVKFQLPI.

A mitochondrion-targeting transit peptide spans 1–14; the sequence is NNHGLQIQQQQQRN. The ATP-grasp domain occupies 23 to 250; it reads MELLQEAGVS…SNSAYRQKKI (228 aa). An N6-acetyllysine modification is found at lysine 40. Tyrosine 46 is subject to Phosphotyrosine. Lysine 50 is modified (N6-acetyllysine; alternate). Lysine 50 carries the N6-succinyllysine; alternate modification. Residues lysine 60 and 67–69 each bind ATP; that span reads GRG. N6-acetyllysine is present on residues lysine 91, lysine 101, lysine 105, and lysine 178. The Mg(2+) site is built by asparagine 220 and aspartate 234. Serine 241 carries the phosphoserine modification. Asparagine 285 provides a ligand contact to substrate. Threonine 303 is modified (phosphothreonine). Lysine 330 is modified (N6-acetyllysine). 342 to 344 lines the substrate pocket; it reads GIM. The residue at position 400 (lysine 400) is an N6-acetyllysine.

This sequence belongs to the succinate/malate CoA ligase beta subunit family. ATP-specific subunit beta subfamily. As to quaternary structure, heterodimer of an alpha and a beta subunit. The beta subunit determines specificity for ATP. Interacts with ALAS2. Mg(2+) is required as a cofactor.

The protein localises to the mitochondrion. It carries out the reaction succinate + ATP + CoA = succinyl-CoA + ADP + phosphate. It functions in the pathway carbohydrate metabolism; tricarboxylic acid cycle; succinate from succinyl-CoA (ligase route): step 1/1. ATP-specific succinyl-CoA synthetase functions in the citric acid cycle (TCA), coupling the hydrolysis of succinyl-CoA to the synthesis of ATP and thus represents the only step of substrate-level phosphorylation in the TCA. The beta subunit provides nucleotide specificity of the enzyme and binds the substrate succinate, while the binding sites for coenzyme A and phosphate are found in the alpha subunit. The protein is Succinate--CoA ligase [ADP-forming] subunit beta, mitochondrial of Sus scrofa (Pig).